Here is a 121-residue protein sequence, read N- to C-terminus: uncharacterized protein (121 aa).

3 helical membrane passes run 2-22, 42-62, and 89-109; these read VFVT…IYTI, FICI…YILF, and IFFA…LSIF.

It localises to the membrane. This is an uncharacterized protein from Saccharomyces cerevisiae (strain ATCC 204508 / S288c) (Baker's yeast).